The primary structure comprises 128 residues: uncharacterized protein (128 aa).

Disordered regions lie at residues 62–83 and 101–128; these read LNPSSHPPSPDFPTGSSASPRV and FAASSSSTAPVTVTDKPVTPAVSKRYQP. Positions 101 to 114 are enriched in low complexity; that stretch reads FAASSSSTAPVTVT.

Its subcellular location is the cytoplasm. The protein resides in the nucleus. This is an uncharacterized protein from Saccharomyces cerevisiae (strain ATCC 204508 / S288c) (Baker's yeast).